Consider the following 69-residue polypeptide: Putative F-box protein At2g33705 (69 aa).

Positions 14–59 constitute an F-box domain; that stretch reads GVNLEQIPYDLVLEILLKLSAKSIARFRCVSKLWDSTFRSRYFTEL.

This Arabidopsis thaliana (Mouse-ear cress) protein is Putative F-box protein At2g33705.